A 187-amino-acid chain; its full sequence is uncharacterized protein (187 aa).

The signal sequence occupies residues 1 to 28 (MRLHRTNNSRRCTILLILALKIFDFVDT). 4 N-linked (GlcNAc...) asparagine glycosylation sites follow: Asn58, Asn70, Asn156, and Asn168.

It localises to the secreted. This is an uncharacterized protein from Caenorhabditis elegans.